The sequence spans 544 residues: Chaperonin GroEL (544 aa).

Residues 29–32 (TLGP), 86–90 (DGTTT), Gly413, 476–478 (NAA), and Asp492 contribute to the ATP site. Residues 522-544 (PDPNANNNAAAGANPAAGMGGMM) are disordered. The span at 524-538 (PNANNNAAAGANPAA) shows a compositional bias: low complexity.

It belongs to the chaperonin (HSP60) family. As to quaternary structure, forms a cylinder of 14 subunits composed of two heptameric rings stacked back-to-back. Interacts with the co-chaperonin GroES.

It localises to the cytoplasm. The enzyme catalyses ATP + H2O + a folded polypeptide = ADP + phosphate + an unfolded polypeptide.. Together with its co-chaperonin GroES, plays an essential role in assisting protein folding. The GroEL-GroES system forms a nano-cage that allows encapsulation of the non-native substrate proteins and provides a physical environment optimized to promote and accelerate protein folding. The polypeptide is Chaperonin GroEL (Lacticaseibacillus casei (strain BL23) (Lactobacillus casei)).